Reading from the N-terminus, the 321-residue chain is MQELDLIIVGAGPVGLYAAFYAGMRGLSVAIIESAQVAGGQPQNLYPEKLIYDIAGLPAVTGADLTKNLLEQLAQISHRLFLGESVQKIEKEDGIFSVITDKSNRKAKAVLLTTGAGLLKPRKLGIDNEENLANEGKISYFITSLKEFEGKNVAVFGGGDSALDWSLMLEKVAKEVHLVHRRTAFRGHEMTVDRVMNSGIQVHTPYTFSNFNENDLELKKVKAEENLNFSIDKILVNYGFLTNQVSLAENLEVSRNGRVKADSMMQSNIEGLYVAGDASDYAGKMPLMSVGFGEAVHAINAMTKKLEFDHPLRGGHSSSIF.

The FAD site is built by E33, Q41, Y46, V86, L119, D277, and S318.

Belongs to the ferredoxin--NADP reductase type 2 family. In terms of assembly, homodimer. It depends on FAD as a cofactor.

It catalyses the reaction 2 reduced [2Fe-2S]-[ferredoxin] + NADP(+) + H(+) = 2 oxidized [2Fe-2S]-[ferredoxin] + NADPH. The protein is Ferredoxin--NADP reductase of Lactococcus lactis subsp. cremoris (strain SK11).